The primary structure comprises 92 residues: Small ribosomal subunit protein bS20 (92 aa).

The interval 1–23 (MANSPSAKKRAIQAEKRRSHNAS) is disordered.

It belongs to the bacterial ribosomal protein bS20 family.

Binds directly to 16S ribosomal RNA. This Stutzerimonas stutzeri (strain A1501) (Pseudomonas stutzeri) protein is Small ribosomal subunit protein bS20.